The chain runs to 599 residues: NTPase KAP family P-loop domain-containing protein 1 (599 aa).

The region spanning 1–416 is the KAP NTPase domain; that stretch reads MQQEAAQRES…NTVPITVRLL (416 aa). Transmembrane regions (helical) follow at residues 25–45, 119–139, and 156–176; these read GWGV…ITEL, VCLA…LLYL, and ALGG…VYSV. The segment at 543–599 is disordered; it reads ALKPPSPPKSPSQDGPQASPRAIIAAGTSHAGQGSGHSKEAHQTRDRTHGGKPRPMA. The span at 579 to 591 shows a compositional bias: basic and acidic residues; it reads HSKEAHQTRDRTH.

Its subcellular location is the membrane. The protein is NTPase KAP family P-loop domain-containing protein 1 (Nkpd1) of Mus musculus (Mouse).